A 71-amino-acid polypeptide reads, in one-letter code: Protein translocase subunit SecE (71 aa).

A helical membrane pass occupies residues 43-63; it reads VAGAGILAVGAVGFIIYVLLT.

This sequence belongs to the SecE/SEC61-gamma family. Component of the Sec protein translocase complex. Heterotrimer consisting of SecY (alpha), SecG (beta) and SecE (gamma) subunits. The heterotrimers can form oligomers, although 1 heterotrimer is thought to be able to translocate proteins. Interacts with the ribosome. May interact with SecDF, and other proteins may be involved.

It localises to the cell membrane. Functionally, essential subunit of the Sec protein translocation channel SecYEG. Clamps together the 2 halves of SecY. May contact the channel plug during translocation. This Methanosarcina mazei (strain ATCC BAA-159 / DSM 3647 / Goe1 / Go1 / JCM 11833 / OCM 88) (Methanosarcina frisia) protein is Protein translocase subunit SecE.